The primary structure comprises 149 residues: Prefoldin subunit alpha (149 aa).

Belongs to the prefoldin alpha subunit family. In terms of assembly, heterohexamer of two alpha and four beta subunits.

The protein resides in the cytoplasm. In terms of biological role, molecular chaperone capable of stabilizing a range of proteins. Seems to fulfill an ATP-independent, HSP70-like function in archaeal de novo protein folding. The sequence is that of Prefoldin subunit alpha from Methanoculleus marisnigri (strain ATCC 35101 / DSM 1498 / JR1).